The following is a 46-amino-acid chain: Amine oxidase [flavin-containing] A (46 aa).

The protein belongs to the flavin monoamine oxidase family. Monomer, homo- or heterodimer (containing two subunits of similar size). Each subunit contains a covalently bound flavin. Enzymatically active as monomer. The cofactor is FAD.

The protein resides in the mitochondrion outer membrane. The enzyme catalyses a secondary aliphatic amine + O2 + H2O = a primary amine + an aldehyde + H2O2. It catalyses the reaction a primary methyl amine + O2 + H2O = an aldehyde + H2O2 + NH4(+). It carries out the reaction (R)-adrenaline + O2 + H2O = (R)-3,4-dihydroxymandelaldehyde + methylamine + H2O2. The catalysed reaction is dopamine + O2 + H2O = 3,4-dihydroxyphenylacetaldehyde + H2O2 + NH4(+). The enzyme catalyses tyramine + O2 + H2O = (4-hydroxyphenyl)acetaldehyde + H2O2 + NH4(+). It catalyses the reaction (R)-noradrenaline + O2 + H2O = (R)-3,4-dihydroxymandelaldehyde + H2O2 + NH4(+). It carries out the reaction serotonin + O2 + H2O = (5-hydroxyindol-3-yl)acetaldehyde + H2O2 + NH4(+). The catalysed reaction is kynuramine + O2 + H2O = 3-(2-aminophenyl)-3-oxopropanal + H2O2 + NH4(+). The enzyme catalyses tryptamine + O2 + H2O = indole-3-acetaldehyde + H2O2 + NH4(+). It catalyses the reaction 2-phenylethylamine + O2 + H2O = 2-phenylacetaldehyde + H2O2 + NH4(+). Its function is as follows. Catalyzes the oxidative deamination of primary and some secondary amine such as neurotransmitters, with concomitant reduction of oxygen to hydrogen peroxide and has important functions in the metabolism of neuroactive and vasoactive amines in the central nervous system and peripheral tissues. Preferentially oxidizes serotonin. Also catalyzes the oxidative deamination of kynuramine to 3-(2-aminophenyl)-3-oxopropanal that can spontaneously condense to 4-hydroxyquinoline. The polypeptide is Amine oxidase [flavin-containing] A (Ovis aries (Sheep)).